The following is an 89-amino-acid chain: Dynein light chain 2, cytoplasmic (89 aa).

Belongs to the dynein light chain family. In terms of assembly, homodimer. The cytoplasmic dynein 1 complex consists of two catalytic heavy chains (HCs) and a number of non-catalytic subunits which present intermediate chains (ICs), light intermediate chains (LICs) and light chains (LCs); the composition seems to vary in respect to the IC, LIC and LC composition. The heavy chain homodimer serves as a scaffold for the probable homodimeric assembly of the respective non-catalytic subunits. Dynein ICs and LICs bind directly to the HC dimer and the LCs assemble on the IC dimer. Interacts with DYNC1I1. Interacts with BMF. Component of the myosin V motor complex. Interacts with BCAS1. Interacts with Basson/BSN. Interacts with AMBRA1 (via TQT motifs); tethering AMBRA1 to the cytoskeleton. Interacts with IQUB.

It is found in the cytoplasm. The protein resides in the cytoskeleton. Functionally, acts as one of several non-catalytic accessory components of the cytoplasmic dynein 1 complex that are thought to be involved in linking dynein to cargos and to adapter proteins that regulate dynein function. Cytoplasmic dynein 1 acts as a motor for the intracellular retrograde motility of vesicles and organelles along microtubules. May play a role in changing or maintaining the spatial distribution of cytoskeletal structures. The protein is Dynein light chain 2, cytoplasmic (DYNLL2) of Homo sapiens (Human).